Consider the following 248-residue polypeptide: ATP synthase subunit a (248 aa).

The next 6 membrane-spanning stretches (helical) occupy residues 25 to 45 (IAFT…AVMM), 83 to 103 (FFPL…VGII), 113 to 133 (LIVT…YGLA), 142 to 162 (LFVP…IEVI), 192 to 212 (FIAM…LPLG), and 215 to 235 (IALT…FAIL).

The protein belongs to the ATPase A chain family. As to quaternary structure, F-type ATPases have 2 components, CF(1) - the catalytic core - and CF(0) - the membrane proton channel. CF(1) has five subunits: alpha(3), beta(3), gamma(1), delta(1), epsilon(1). CF(0) has four main subunits: a, b, b' and c.

Its subcellular location is the cell inner membrane. Its function is as follows. Key component of the proton channel; it plays a direct role in the translocation of protons across the membrane. This Rhodopseudomonas palustris (strain HaA2) protein is ATP synthase subunit a.